A 69-amino-acid chain; its full sequence is uncharacterized protein (69 aa).

An N-terminal signal peptide occupies residues 1-16; it reads MKKIMLFLAMTSILSA. A lipid anchor (N-palmitoyl cysteine) is attached at Cys-17. Cys-17 carries the S-diacylglycerol cysteine lipid modification.

The protein localises to the cell membrane. This is an uncharacterized protein from Bacillus subtilis (strain 168).